Consider the following 88-residue polypeptide: Cell division topological specificity factor (88 aa).

This sequence belongs to the MinE family.

In terms of biological role, prevents the cell division inhibition by proteins MinC and MinD at internal division sites while permitting inhibition at polar sites. This ensures cell division at the proper site by restricting the formation of a division septum at the midpoint of the long axis of the cell. The protein is Cell division topological specificity factor of Methylibium petroleiphilum (strain ATCC BAA-1232 / LMG 22953 / PM1).